The chain runs to 156 residues: Small ribosomal subunit protein uS7 (156 aa).

Belongs to the universal ribosomal protein uS7 family. In terms of assembly, part of the 30S ribosomal subunit. Contacts proteins S9 and S11.

Functionally, one of the primary rRNA binding proteins, it binds directly to 16S rRNA where it nucleates assembly of the head domain of the 30S subunit. Is located at the subunit interface close to the decoding center, probably blocks exit of the E-site tRNA. In Mycoplasmopsis agalactiae (strain NCTC 10123 / CIP 59.7 / PG2) (Mycoplasma agalactiae), this protein is Small ribosomal subunit protein uS7.